The chain runs to 70 residues: Putative membrane protein insertion efficiency factor (70 aa).

This sequence belongs to the UPF0161 family.

It localises to the cell inner membrane. Its function is as follows. Could be involved in insertion of integral membrane proteins into the membrane. This chain is Putative membrane protein insertion efficiency factor, found in Methylobacillus flagellatus (strain ATCC 51484 / DSM 6875 / VKM B-1610 / KT).